The following is a 159-amino-acid chain: uncharacterized protein (159 aa).

The next 3 membrane-spanning stretches (helical) occupy residues 16–36, 84–104, and 112–132; these read IVLPLVQIIHVSGHSFMAFIF, VYAGGCLFNLITIFAINLLII, and VFFYQFVYFSTYYVFFALLPV.

It localises to the cell membrane. This is an uncharacterized protein from Bacillus subtilis (strain 168).